A 96-amino-acid chain; its full sequence is Large ribosomal subunit protein bL21 (96 aa).

Belongs to the bacterial ribosomal protein bL21 family. As to quaternary structure, part of the 50S ribosomal subunit. Contacts protein L20.

Functionally, this protein binds to 23S rRNA in the presence of protein L20. The sequence is that of Large ribosomal subunit protein bL21 from Chlorobium chlorochromatii (strain CaD3).